The primary structure comprises 546 residues: Chaperonin GroEL (546 aa).

Residues 30 to 33 (TLGP), lysine 51, 87 to 91 (DGTTT), glycine 415, 479 to 481 (NAA), and aspartate 495 each bind ATP.

The protein belongs to the chaperonin (HSP60) family. In terms of assembly, forms a cylinder of 14 subunits composed of two heptameric rings stacked back-to-back. Interacts with the co-chaperonin GroES.

The protein resides in the cytoplasm. The catalysed reaction is ATP + H2O + a folded polypeptide = ADP + phosphate + an unfolded polypeptide.. Its function is as follows. Together with its co-chaperonin GroES, plays an essential role in assisting protein folding. The GroEL-GroES system forms a nano-cage that allows encapsulation of the non-native substrate proteins and provides a physical environment optimized to promote and accelerate protein folding. This is Chaperonin GroEL from Xanthomonas campestris pv. phaseoli.